The following is a 304-amino-acid chain: Protein Largen (304 aa).

A compositionally biased stretch (polar residues) spans 1 to 13 (MSAKSKGNPSSSC). Disordered regions lie at residues 1–27 (MSAK…TKVK), 66–91 (QLED…TASS), 114–160 (LTVL…GGLP), and 239–304 (HPPG…TTTV). A coiled-coil region spans residues 33 to 70 (IVEDLELVLGDLKDVAKELKEVVDQIDTLTSDLQLEDE). Over residues 77-91 (TDTLNSSSSGTTASS) the composition is skewed to low complexity. Pro residues-rich tracts occupy residues 120-129 (PNPPPPPPRL), 239-261 (HPPG…PPFP), and 277-289 (PIRP…PTAP).

Functionally, regulator of cell size that promotes cell size increase independently of mTOR and Hippo signaling pathways. Acts by stimulating the translation of specific mRNAs, including those encoding proteins affecting mitochondrial functions. Increases mitochondrial mass and respiration. This is Protein Largen (PRR16) from Homo sapiens (Human).